The primary structure comprises 474 residues: Cytochrome c biogenesis protein CcsB (474 aa).

Transmembrane regions (helical) follow at residues 36–56 (LKLA…GTVI), 96–116 (SWWF…CTFR), and 182–202 (VGPI…MIGA).

This sequence belongs to the Ccs1/CcsB family. As to quaternary structure, may interact with CcsA.

It localises to the cell inner membrane. Its function is as follows. Required during biogenesis of c-type cytochromes (cytochrome c6 and cytochrome f) at the step of heme attachment. This chain is Cytochrome c biogenesis protein CcsB, found in Gloeobacter violaceus (strain ATCC 29082 / PCC 7421).